A 519-amino-acid polypeptide reads, in one-letter code: Transmembrane protein 180 (519 aa).

Residues 1–11 lie on the Extracellular side of the membrane; sequence MGLDWPQAWLL. A helical transmembrane segment spans residues 12–43; sequence GLPIAVVYGSLALFTSILHNVFLLYYVDTFVS. The Cytoplasmic portion of the chain corresponds to 44-55; it reads VYKINKVSFWVG. Residues 56 to 74 traverse the membrane as a helical segment; the sequence is ETVFLLWNSFNDPLFGWLS. At 75-100 the chain is on the extracellular side; that stretch reads DRQLLSSQPRSGAGLSSRDVVLTRVR. Residues 101–118 form a helical membrane-spanning segment; the sequence is ALGWHGPLLALSFLAFWV. The Cytoplasmic portion of the chain corresponds to 119-126; that stretch reads PWAPAGLQ. Residues 127 to 151 form a helical membrane-spanning segment; sequence FLLCLCLYDGFLTLVDLHHHALLAD. The Extracellular portion of the chain corresponds to 152–155; sequence LALS. The helical transmembrane segment at 156–179 threads the bilayer; sequence SHDRTHLNFYCSLFSAAGSLSVFA. Residues 180-191 are Cytoplasmic-facing; the sequence is SYAFWNKEDFSS. The chain crosses the membrane as a helical span at residues 192–223; it reads FRAFCVVLAAGSGLGFLGTTQLLKRQIEATRR. Residues 224-264 are Extracellular-facing; the sequence is DRGCPGLDLDGGVCEEEPPVGGEEAGNITLGQYLRQLARHQ. Residue Asn-250 is glycosylated (N-linked (GlcNAc...) asparagine). The chain crosses the membrane as a helical span at residues 265–292; that stretch reads NFLWFVGMDLVQVFHCHFNSNFFPLFLE. At 293–305 the chain is on the cytoplasmic side; sequence HLLSDHISLSTGS. The helical transmembrane segment at 306–325 threads the bilayer; sequence FLLGISYVAPHLNNLYFLPL. The Extracellular segment spans residues 326 to 330; sequence CRRWG. The chain crosses the membrane as a helical span at residues 331–350; sequence VYAVVRGLFLLKLSLSLLML. Over 351 to 358 the chain is Cytoplasmic; that stretch reads LAGPDHPG. A helical membrane pass occupies residues 359–393; that stretch reads LLCFFIASNRVFTEGTCKLLTLVVTDLVDEDLVLN. Residues 394 to 402 lie on the Extracellular side of the membrane; that stretch reads HRKQAASAL. A helical membrane pass occupies residues 403–429; it reads LFGMVALVTKPGQTFAPLLGTWLLCFY. Topologically, residues 430–468 are cytoplasmic; the sequence is TGHDLFQQSPMTPVGSVRPWPELPAPAPAPAQAPTLRQG. The helical transmembrane segment at 469-487 threads the bilayer; it reads CFYLLVFVPITCALLQLFT. Residues 488-519 are Extracellular-facing; that stretch reads WSQFTLHGRRLRTVKAQRQNLAQIHTLNIKMV.

Its subcellular location is the cell membrane. The protein is Transmembrane protein 180 of Mus musculus (Mouse).